The primary structure comprises 213 residues: Peptidoglycan-N-acetylglucosamine deacetylase BC_3618 (213 aa).

The NodB homology domain maps to 22–203; the sequence is KIIAITFDDG…ELKKQGYRFV (182 aa). D29 (proton acceptor) is an active-site residue. Positions 30, 80, and 84 each coordinate Zn(2+). H175 acts as the Proton donor in catalysis.

The protein belongs to the polysaccharide deacetylase family. It depends on Zn(2+) as a cofactor.

The catalysed reaction is peptidoglycan-N-acetyl-D-glucosamine + H2O = peptidoglycan-D-glucosamine + acetate.. Its activity is regulated as follows. Inhibited by CuCl(2) and ZnCl(2). Its function is as follows. Catalyzes the deacetylation of N-acetylglucosamine (GlcNAc) residues in peptidoglycan. Also acts on soluble chitin substrates and N-acetylchitooligomers. Acts on cell wall peptidoglycan from the Gram-positive bacteria B.cereus and B.subtilis and the Gram-negative bacterium H.pylori. Not active on acetylated xylan. In Bacillus cereus (strain ATCC 14579 / DSM 31 / CCUG 7414 / JCM 2152 / NBRC 15305 / NCIMB 9373 / NCTC 2599 / NRRL B-3711), this protein is Peptidoglycan-N-acetylglucosamine deacetylase BC_3618.